The primary structure comprises 320 residues: Lipoyl synthase (320 aa).

Cys-67, Cys-72, Cys-78, Cys-93, Cys-97, Cys-100, and Ser-307 together coordinate [4Fe-4S] cluster. The region spanning 79-296 is the Radical SAM core domain; that stretch reads FNHGTATFMI…RDKANEMGFE (218 aa).

It belongs to the radical SAM superfamily. Lipoyl synthase family. [4Fe-4S] cluster serves as cofactor.

It is found in the cytoplasm. It catalyses the reaction [[Fe-S] cluster scaffold protein carrying a second [4Fe-4S](2+) cluster] + N(6)-octanoyl-L-lysyl-[protein] + 2 oxidized [2Fe-2S]-[ferredoxin] + 2 S-adenosyl-L-methionine + 4 H(+) = [[Fe-S] cluster scaffold protein] + N(6)-[(R)-dihydrolipoyl]-L-lysyl-[protein] + 4 Fe(3+) + 2 hydrogen sulfide + 2 5'-deoxyadenosine + 2 L-methionine + 2 reduced [2Fe-2S]-[ferredoxin]. Its pathway is protein modification; protein lipoylation via endogenous pathway; protein N(6)-(lipoyl)lysine from octanoyl-[acyl-carrier-protein]: step 2/2. Catalyzes the radical-mediated insertion of two sulfur atoms into the C-6 and C-8 positions of the octanoyl moiety bound to the lipoyl domains of lipoate-dependent enzymes, thereby converting the octanoylated domains into lipoylated derivatives. The chain is Lipoyl synthase from Haemophilus influenzae (strain PittEE).